The following is a 63-amino-acid chain: Large ribosomal subunit protein bL28A (63 aa).

This sequence belongs to the bacterial ribosomal protein bL28 family.

The sequence is that of Large ribosomal subunit protein bL28A from Nocardia farcinica (strain IFM 10152).